A 371-amino-acid polypeptide reads, in one-letter code: Putrescine N-methyltransferase 2 (371 aa).

Polar residues-rich tracts occupy residues 1-14 (MEVI…STIF) and 23-70 (GHQN…HDNG). The segment at 1 to 70 (MEVISTNTNG…QNGTISHDNG (70 aa)) is disordered. The PABS domain occupies 82–319 (PGWFSEFSAL…GVIGYMLCST (238 aa)). S-adenosyl-L-methionine-binding positions include glutamine 113, glutamate 188, and 219–220 (DG). The Proton acceptor role is filled by aspartate 238. An S-adenosyl-L-methionine-binding site is contributed by tyrosine 307.

It belongs to the class I-like SAM-binding methyltransferase superfamily. Spermidine/spermine synthase family. As to expression, mainly expressed in roots.

The enzyme catalyses putrescine + S-adenosyl-L-methionine = N-methylputrescine + S-adenosyl-L-homocysteine + H(+). Its pathway is alkaloid biosynthesis; nicotine biosynthesis. In terms of biological role, involved in the biosynthesis of pyridine alkaloid natural products, leading mainly to the production of anabasine, anatabine, nicotine and nornicotine, effective deterrents against herbivores with antiparasitic and pesticide properties (neurotoxins); nornicotine serves as the precursor in the synthesis of the carcinogen compound N'-nitrosonornicotine (NNN). Methyltransferase that mediates the conversion of putrescine to N-methylputrescine. In Nicotiana attenuata (Coyote tobacco), this protein is Putrescine N-methyltransferase 2.